The following is a 146-amino-acid chain: NADH-quinone oxidoreductase subunit A (146 aa).

3 helical membrane-spanning segments follow: residues 16–36 (FAIF…GGWF), 68–88 (FYLV…LFAW), and 98–118 (VGFV…VYLV).

Belongs to the complex I subunit 3 family. NDH-1 is composed of 13 different subunits. Subunits NuoA, H, J, K, L, M, N constitute the membrane sector of the complex.

It is found in the cell inner membrane. It catalyses the reaction a quinone + NADH + 5 H(+)(in) = a quinol + NAD(+) + 4 H(+)(out). Its function is as follows. NDH-1 shuttles electrons from NADH, via FMN and iron-sulfur (Fe-S) centers, to quinones in the respiratory chain. The immediate electron acceptor for the enzyme in this species is believed to be ubiquinone. Couples the redox reaction to proton translocation (for every two electrons transferred, four hydrogen ions are translocated across the cytoplasmic membrane), and thus conserves the redox energy in a proton gradient. The sequence is that of NADH-quinone oxidoreductase subunit A from Enterobacter sp. (strain 638).